A 400-amino-acid polypeptide reads, in one-letter code: Na(+)/H(+) antiporter NhaA (400 aa).

A run of 12 helical transmembrane segments spans residues 18 to 38 (LATEAAGGVLLMFTAALAIII), 68 to 88 (VHMWINDGLMAIFFLLVGLEI), 105 to 125 (LPALPALMGMAVPALIYLAVS), 133 to 153 (GGWAIPAATDIAFAVGALALL), 163 to 183 (VMLVSVAIIDDMGAVAIIAVF), 186 to 206 (SSINLLALAGAAGIVAVLLAF), 211 to 231 (VVALWPYLIGVAALWYVTLLS), 232 to 252 (GVHATIAGVVGALLIPYSAGS), 267 to 287 (GLAPWVGFLIVPAFGFANAGV), 305 to 325 (IALGLLLGKQLGVFAGVLLAV), 338 to 358 (WLQIYGVAMLCGIGFTMSLFI), and 372 to 392 (AAKIGILLGSLLSAVIACVIL).

This sequence belongs to the NhaA Na(+)/H(+) (TC 2.A.33) antiporter family.

The protein localises to the cell inner membrane. The catalysed reaction is Na(+)(in) + 2 H(+)(out) = Na(+)(out) + 2 H(+)(in). Na(+)/H(+) antiporter that extrudes sodium in exchange for external protons. This is Na(+)/H(+) antiporter NhaA from Pseudomonas entomophila (strain L48).